The primary structure comprises 294 residues: Agamous-like MADS-box protein AGL82 (294 aa).

The MADS-box domain occupies 1–51 (MVPKVVDLQRIANDKTRITTYKKRKASLYKKAQEFSTLCGVETCLIVYGPT).

As to quaternary structure, interacts with MEE14/CBP1.

The protein resides in the nucleus. Its function is as follows. Probable transcription factor that may function in the maintenance of the proper function of the central cell in pollen tube attraction. The chain is Agamous-like MADS-box protein AGL82 from Arabidopsis thaliana (Mouse-ear cress).